Here is a 189-residue protein sequence, read N- to C-terminus: Chitin synthase 3 (189 aa).

Belongs to the chitin synthase family. Class II subfamily.

It localises to the cell membrane. It catalyses the reaction [(1-&gt;4)-N-acetyl-beta-D-glucosaminyl](n) + UDP-N-acetyl-alpha-D-glucosamine = [(1-&gt;4)-N-acetyl-beta-D-glucosaminyl](n+1) + UDP + H(+). Its function is as follows. Polymerizes chitin, a structural polymer of the cell wall and septum, by transferring the sugar moiety of UDP-GlcNAc to the non-reducing end of the growing chitin polymer. The polypeptide is Chitin synthase 3 (CHS3) (Ajellomyces capsulatus (Darling's disease fungus)).